The primary structure comprises 206 residues: dCTP deaminase, dUMP-forming (206 aa).

Residues 117–122 (RSSFGR), Asp135, 143–145 (TLE), Gln163, Tyr177, Lys184, and Gln188 contribute to the dCTP site. Glu145 serves as the catalytic Proton donor/acceptor.

Belongs to the dCTP deaminase family. As to quaternary structure, homotrimer.

The catalysed reaction is dCTP + 2 H2O = dUMP + NH4(+) + diphosphate. It participates in pyrimidine metabolism; dUMP biosynthesis; dUMP from dCTP: step 1/1. In terms of biological role, bifunctional enzyme that catalyzes both the deamination of dCTP to dUTP and the hydrolysis of dUTP to dUMP without releasing the toxic dUTP intermediate. This chain is dCTP deaminase, dUMP-forming, found in Methanococcus vannielii (strain ATCC 35089 / DSM 1224 / JCM 13029 / OCM 148 / SB).